The following is a 78-amino-acid chain: Large ribosomal subunit protein bL28 (78 aa).

The protein belongs to the bacterial ribosomal protein bL28 family.

The sequence is that of Large ribosomal subunit protein bL28 from Ruthia magnifica subsp. Calyptogena magnifica.